Here is a 252-residue protein sequence, read N- to C-terminus: MKIKMRGQDVKVFYGSKEALHGITLDIPEHQVTALIGPSGCGKSTFLRCFNRMNDTIEGAKITGLITLDGENIYESRIDVVELRARVGMVFQKPSPFPKSIFENVAYGPRIHGLVKSRAELHDVVEKSLRQAGLFEEVKDRLHEAGTSLSGGQQQRLCIARAIAVSPEVILMDEPCSALDPIATARIEELIDALRKDYTIVIVTHSMQQAARVSQYTAMFHLGHLVEVGETEVMFTSPKEQRTQDYITGRFG.

Residues 5–247 (MRGQDVKVFY…PKEQRTQDYI (243 aa)) enclose the ABC transporter domain. 37 to 44 (GPSGCGKS) lines the ATP pocket.

It belongs to the ABC transporter superfamily. Phosphate importer (TC 3.A.1.7) family. As to quaternary structure, the complex is composed of two ATP-binding proteins (PstB), two transmembrane proteins (PstC and PstA) and a solute-binding protein (PstS).

Its subcellular location is the cell inner membrane. The enzyme catalyses phosphate(out) + ATP + H2O = ADP + 2 phosphate(in) + H(+). Functionally, part of the ABC transporter complex PstSACB involved in phosphate import. Responsible for energy coupling to the transport system. In Bartonella henselae (strain ATCC 49882 / DSM 28221 / CCUG 30454 / Houston 1) (Rochalimaea henselae), this protein is Phosphate import ATP-binding protein PstB.